The primary structure comprises 872 residues: Eukaryotic translation initiation factor 3 subunit C (872 aa).

Residues 1 to 100 are disordered; that stretch reads MSRFFRGGDD…KVKSAKDKRF (100 aa). Acidic residues-rich tracts occupy residues 16 to 59 and 72 to 87; these read SSEE…DEEE and SDDESEEEEEEQSDDE. Residues 88 to 100 show a composition bias toward basic and acidic residues; it reads ATTKVKSAKDKRF. The PCI domain maps to 613-787; that stretch reads FHMHINLELL…ETVIFRKGVE (175 aa). The segment at 812-872 is disordered; the sequence is TLEQKTQGSA…GGALGNAVRG (61 aa). Positions 831–848 are enriched in gly residues; the sequence is GGGQRGGGQRGGRGGART.

This sequence belongs to the eIF-3 subunit C family. In terms of assembly, component of the eukaryotic translation initiation factor 3 (eIF-3) complex.

It localises to the cytoplasm. Component of the eukaryotic translation initiation factor 3 (eIF-3) complex, which is involved in protein synthesis of a specialized repertoire of mRNAs and, together with other initiation factors, stimulates binding of mRNA and methionyl-tRNAi to the 40S ribosome. The eIF-3 complex specifically targets and initiates translation of a subset of mRNAs involved in cell proliferation. The polypeptide is Eukaryotic translation initiation factor 3 subunit C (nip-1) (Neurospora crassa (strain ATCC 24698 / 74-OR23-1A / CBS 708.71 / DSM 1257 / FGSC 987)).